The sequence spans 778 residues: MIRTVTRPRQWQRWVYSSCLLQRAVPPAAARQQPRFTTSHKANHFGYHQPIAPVTHAPITREDDFVLRSVFDYPQFWQDFTSVPGGIPVGLFRNSFLKEPRGMLTFAYVSLKKARAVVAKVLAASSVTEYRLIVRDLDRLSDILCRVLDMADFVRVTHPDPEIQQNASKAWESVYEYMNELNTMTGLHDQLATAMANPDVTVVWSEEEKTVAEVLKLDFTKSAVSLPQKYRDRFVQLSSEISAVGSAFVQEMAPEQETVVLPSSDLRGMDPVRARDLTRRGKVYLPTLSGEAVMALRTVHDADARKHIFYASRTASRRSVQMLEYLMRLRSELASLSGFESYGHLALRDRMMAKSPEAVDQFLRALVESNRPKAMQEMAELLAEKQKAYPQTNSLDPWDKDYYSDIIRRPLRVAGRQGDLLSSYFSLGVPLVGETWHPDVRRLDVVSDTDGHVAVLYCDLFTRPNKSPNPAHFTLRCSREIFASEMEEVWEQTQQSNQKSMFGSPELAATDGMTFSRHGDSIKQLPTIALVCDFPQPSKHGDQPALLSFLQLETLFHEMGHAIHSVLARTSFQTVAGTRCATDLAELPSTLMEFFAADAAVLGQFARHHETNEPLPYRMVAQKARQTRRFEALDTENQIVTAMFDQALHSPRAGEPGFDPTAIFHALQRTHSCAPPDPPGTSWPGFFGHLSGYGSVYYSYLFDRVLAQRVWDVVFKAGERRAALSRENGEKLKQSLLKWGGARDPWKCLAEALDDDRLAEGGEEAMALVGSWGSTKPR.

Residues Met1–Thr37 constitute a mitochondrion transit peptide. His557 provides a ligand contact to Zn(2+). Glu558 is a catalytic residue. Zn(2+) is bound by residues His561 and His564.

Belongs to the peptidase M3 family. Requires Zn(2+) as cofactor.

The protein resides in the mitochondrion matrix. The catalysed reaction is Release of an N-terminal octapeptide as second stage of processing of some proteins imported into the mitochondrion.. Its function is as follows. Cleaves proteins, imported into the mitochondrion, to their mature size. While most mitochondrial precursor proteins are processed to the mature form in one step by mitochondrial processing peptidase (MPP), the sequential cleavage by MIP of an octapeptide after initial processing by MPP is a required step for a subgroup of nuclear-encoded precursor proteins destined for the matrix or the inner membrane. The sequence is that of Mitochondrial intermediate peptidase (OCT1) from Chaetomium globosum (strain ATCC 6205 / CBS 148.51 / DSM 1962 / NBRC 6347 / NRRL 1970) (Soil fungus).